Here is a 1162-residue protein sequence, read N- to C-terminus: DNA-directed RNA polymerase subunit beta (1162 aa).

It belongs to the RNA polymerase beta chain family. The RNAP catalytic core consists of 2 alpha, 1 beta, 1 beta' and 1 omega subunit. When a sigma factor is associated with the core the holoenzyme is formed, which can initiate transcription.

It catalyses the reaction RNA(n) + a ribonucleoside 5'-triphosphate = RNA(n+1) + diphosphate. In terms of biological role, DNA-dependent RNA polymerase catalyzes the transcription of DNA into RNA using the four ribonucleoside triphosphates as substrates. The sequence is that of DNA-directed RNA polymerase subunit beta from Clavibacter sepedonicus (Clavibacter michiganensis subsp. sepedonicus).